Consider the following 634-residue polypeptide: uncharacterized protein (634 aa).

An N-terminal signal peptide occupies residues 1–40; that stretch reads MWLQQRLKGLPGLLSSSWARRLLCLLGLLVLLLWFASSGA. The Extracellular portion of the chain corresponds to 41-589; sequence RRAAGGLHLP…DEHMAQQDPG (549 aa). N-linked (GlcNAc...) asparagine glycosylation is present at asparagine 363. The helical transmembrane segment at 590-610 threads the bilayer; it reads LPFLFWFSVASLITLFHLFLF. Over 611 to 634 the chain is Cytoplasmic; sequence KLIYNEYCGPGAKPLFRSKEDPSV.

It localises to the membrane. This is an uncharacterized protein from Mus musculus (Mouse).